Consider the following 278-residue polypeptide: Large ribosomal subunit protein uL2 (278 aa).

The interval H201–K278 is disordered. Positions G210 to V221 are enriched in basic residues.

This sequence belongs to the universal ribosomal protein uL2 family. In terms of assembly, part of the 50S ribosomal subunit. Forms a bridge to the 30S subunit in the 70S ribosome.

One of the primary rRNA binding proteins. Required for association of the 30S and 50S subunits to form the 70S ribosome, for tRNA binding and peptide bond formation. It has been suggested to have peptidyltransferase activity; this is somewhat controversial. Makes several contacts with the 16S rRNA in the 70S ribosome. The chain is Large ribosomal subunit protein uL2 from Agrobacterium fabrum (strain C58 / ATCC 33970) (Agrobacterium tumefaciens (strain C58)).